The primary structure comprises 588 residues: Phosphatidylinositol-3,5-bisphosphate 3-phosphatase mtm-1 (588 aa).

Residues 20–91 (IQESIDLKLL…GQVSRIEKVG (72 aa)) enclose the GRAM domain. The Myotubularin phosphatase domain occupies 164–543 (GWKIYSAEKE…CGLHVWIDYY (380 aa)). Residues N293, N316, and I317 each contribute to the a 1,2-diacyl-sn-glycero-3-phospho-(1D-myo-inositol-3,5-bisphosphate) site. Positions 293, 316, and 317 each coordinate a 1,2-diacyl-sn-glycero-3-phospho-(1D-myo-inositol-3-phosphate). The active-site Phosphocysteine intermediate is the C378. Positions 379, 380, 381, 382, 383, 384, 420, and 424 each coordinate a 1,2-diacyl-sn-glycero-3-phospho-(1D-myo-inositol-3,5-bisphosphate). S379, D380, G381, W382, D383, and R384 together coordinate a 1,2-diacyl-sn-glycero-3-phospho-(1D-myo-inositol-3-phosphate). S379 provides a ligand contact to phosphate. Phosphate is bound by residues G381, W382, D383, and R384. Residue R424 participates in a 1,2-diacyl-sn-glycero-3-phospho-(1D-myo-inositol-3-phosphate) binding. A coiled-coil region spans residues 563–588 (AQFVDEKKQLLDEIMALDDAAQKLTA).

The protein belongs to the protein-tyrosine phosphatase family. Non-receptor class myotubularin subfamily. In terms of tissue distribution, expressed in embryo, larva and in adults. Expressed in a few head and tail neurons. Expressed in hypodermis, body wall and pharyngeal muscles, sheath cells, vulva, distal tip cells and coelomocytes.

The protein resides in the cell membrane. It is found in the cell projection. The protein localises to the phagocytic cup. It localises to the apical cell membrane. Its subcellular location is the cytoplasmic granule membrane. The enzyme catalyses a 1,2-diacyl-sn-glycero-3-phospho-(1D-myo-inositol-3,5-bisphosphate) + H2O = a 1,2-diacyl-sn-glycero-3-phospho-(1D-myo-inositol-5-phosphate) + phosphate. The catalysed reaction is a 1,2-diacyl-sn-glycero-3-phospho-(1D-myo-inositol-3-phosphate) + H2O = a 1,2-diacyl-sn-glycero-3-phospho-(1D-myo-inositol) + phosphate. It catalyses the reaction 1,2-dioctanoyl-sn-glycero-3-phospho-(1-D-myo-inositol-3-phosphate) + H2O = 1,2-dioctanoyl-sn-glycero-3-phospho-(1D-myo-inositol) + phosphate. In terms of biological role, lipid phosphatase that specifically dephosphorylates phosphatidylinositol 3-phosphate (PI3P) and phosphatidylinositol 3,5-bisphosphate (PI(3,5)P2). Negatively regulates accumulation of PI3P on intracellular vesicles. Negatively regulates phagocytosis of apoptotic cells probably by limiting the recruitment and/or the activation of ced-5, ced-2 and ced-12 complex. In addition, may positively regulate phagosome maturation by promoting recycling of apoptotic receptor ced-1 back to the plasma membrane. Essential for embryonic and larval development. May promote migration of distal tip cells. The polypeptide is Phosphatidylinositol-3,5-bisphosphate 3-phosphatase mtm-1 (Caenorhabditis elegans).